The chain runs to 139 residues: Large ribosomal subunit protein uL16 (139 aa).

Belongs to the universal ribosomal protein uL16 family. As to quaternary structure, part of the 50S ribosomal subunit.

In terms of biological role, binds 23S rRNA and is also seen to make contacts with the A and possibly P site tRNAs. In Chlorobium phaeobacteroides (strain DSM 266 / SMG 266 / 2430), this protein is Large ribosomal subunit protein uL16.